Consider the following 487-residue polypeptide: MKDILKLSIAEMHENLIKKEFSAVELTQAHIDAINNEQLNAFITKTPEVALNAARKADHILTHEQDKITSLTGIPVGIKDLFCTKNIKTTACSNILRNFTPQYDSTVVKRLIDDGAVMLGKLNMDEFAMGSSNSNSCFGPVENPWTRADGVKVVPGGSSGGSSAAVAGFLCAGALGSDTGGSVRQPAAFCGIVGLKPTYGRCSRSGMIAFASSLDQAGVLTRTVKDAALMLQPICGYDTQDSTSANITTPRFLDSITNIIKGKRIGIPKEYELSNKYKEYEEVSEMWLKGIKYLENEGAEIVNISLPHTSYALPVYYIICSAEASSNLARYDGIKYGTRVNSDNINEMYELTRGNNLGTEVKRRILIGAYALSSGYYDAYYNKAQCIRRLVTNDFVESFKSVDYILTPTAPKEAFAMDEQLDTLTMYLNDVFTVPASLAGLPAISIPIGLSKNKLPLSLQIIGNYYDEGGILNIASVIEKYTGNILK.

Active-site charge relay system residues include Lys79 and Ser158. Catalysis depends on Ser182, which acts as the Acyl-ester intermediate.

This sequence belongs to the amidase family. GatA subfamily. As to quaternary structure, heterotrimer of A, B and C subunits.

The catalysed reaction is L-glutamyl-tRNA(Gln) + L-glutamine + ATP + H2O = L-glutaminyl-tRNA(Gln) + L-glutamate + ADP + phosphate + H(+). In terms of biological role, allows the formation of correctly charged Gln-tRNA(Gln) through the transamidation of misacylated Glu-tRNA(Gln) in organisms which lack glutaminyl-tRNA synthetase. The reaction takes place in the presence of glutamine and ATP through an activated gamma-phospho-Glu-tRNA(Gln). This is Glutamyl-tRNA(Gln) amidotransferase subunit A from Ehrlichia ruminantium (strain Gardel).